A 282-amino-acid polypeptide reads, in one-letter code: MIVSGLSGSGKSVALKTFEDLDYYCSDNLPVELLPDFVKSRLRGNPIGNQRLAVGIDVRSRSDLTQLAQWRLAAQEYGIEALLLFFEASDEALIKRYADTRRRHPLSHLGLALPEAITRERQLTEPLRVQADAIIDTSTLNVHQFRRRVVTEFALGSNDRLSLLFESFAYKRGVPAEADFVFDARVLPNPHWDPELRPLTGRDAGVRNYLDNEADVRRYSTQIVDLLDTWLPRLRNDTRSYVTIAFGCTGGKHRSVYMAERMARHAREQGWPEVATFHREQD.

An ATP-binding site is contributed by 5–12; the sequence is GLSGSGKS. Residue 57 to 60 participates in GTP binding; that stretch reads DVRS.

The protein belongs to the RapZ-like family.

Functionally, displays ATPase and GTPase activities. This chain is Nucleotide-binding protein PXO_02223, found in Xanthomonas oryzae pv. oryzae (strain PXO99A).